The chain runs to 336 residues: MAVIESVGANTTVEAGGLISPSPPSSVTSQESGASSNNDHGGNGIHDEIGVHVARSDGGESFKRDMRELHELLSKLNPMAKEFIPPSLTKPVVNGFNGGFFAVNNGFVAAGNFPVNEDGSFRRKKSFGQQGKRRMNPRTSLAQREEIIRRTVYVSDIDQQVTEEQLAGLFIGFGQVVDCRICGDPNSVLRFAFIEFTDEVGARTALNLSGTMLGFYPVKVMPSKTAIAPVNPTFLPRTEDEREMCARTIYCTNIDKKLTQTDIKLFFESVCGEVYRLRLLGDYHHPTRIGFVEFVMAESAIAALNCSGVLLGSLPIRVSPSKTPVRSRAIPRHQMH.

The interval 14–47 (EAGGLISPSPPSSVTSQESGASSNNDHGGNGIHD) is disordered. The segment covering 25–40 (SSVTSQESGASSNNDH) has biased composition (polar residues). The short motif at 75–85 (KLNPMAKEFIP) is the PAM2-like element. The short motif at 122-134 (RRKKSFGQQGKRR) is the Bipartite nuclear localization signal element. RRM domains lie at 150–225 (RTVY…PSKT) and 247–323 (RTIY…PSKT).

As to quaternary structure, interacts with MPC. In terms of tissue distribution, expressed in roots, leaves, stems, flowers and siliques. Detected in flowers only in growing organs: gynoecium, petals, stamenal filaments, anther walls and ovules.

It localises to the nucleus. Its function is as follows. Binds nucleotic acids in vitro. The polypeptide is Polyadenylate-binding protein-interacting protein 12 (CID12) (Arabidopsis thaliana (Mouse-ear cress)).